The chain runs to 510 residues: Glycogen synthase (510 aa).

ADP-alpha-D-glucose is bound at residue K18.

The protein belongs to the glycosyltransferase 1 family. Bacterial/plant glycogen synthase subfamily.

It catalyses the reaction [(1-&gt;4)-alpha-D-glucosyl](n) + ADP-alpha-D-glucose = [(1-&gt;4)-alpha-D-glucosyl](n+1) + ADP + H(+). Its pathway is glycan biosynthesis; glycogen biosynthesis. Synthesizes alpha-1,4-glucan chains using ADP-glucose. The protein is Glycogen synthase of Bordetella bronchiseptica (strain ATCC BAA-588 / NCTC 13252 / RB50) (Alcaligenes bronchisepticus).